The chain runs to 198 residues: MTLRCLEPSGNGGEGTRSQWGTAGSAEEPSPQAARLAKALRELGQTGWYWGSMTVNEAKEKLKEAPEGTFLIRDSSHSDYLLTISVKTSAGPTNLRIEYQDGKFRLDSIICVKSKLKQFDSVVHLIDYYVQMCKDKRTGPEAPRNGTVHLYLTKPLYTSAPSLQHLCRLTINKCTGAIWGLPLPTRLKDYLEEYKFQV.

The interval 1 to 29 is disordered; the sequence is MTLRCLEPSGNGGEGTRSQWGTAGSAEEP. The interval 1 to 75 is interaction with AREL1; it reads MTLRCLEPSG…PEGTFLIRDS (75 aa). Ser-30 carries the phosphoserine modification. An SH2 domain is found at 48 to 156; that stretch reads WYWGSMTVNE…TVHLYLTKPL (109 aa). Phosphoserine; by PKC is present on Ser-52. In terms of domain architecture, SOCS box spans 151-197; it reads YLTKPLYTSAPSLQHLCRLTINKCTGAIWGLPLPTRLKDYLEEYKFQ. Residue Lys-173 forms a Glycyl lysine isopeptide (Lys-Gly) (interchain with G-Cter in ubiquitin) linkage.

Substrate-recognition component of the ECS(SOCS2) complex, composed of SOCS2, CUL5, ELOB, ELOC and RNF7/RBX2. Interacts with IGF1R. Interacts with DCUN1D1. In terms of processing, ubiquitinated; mediated by AREL1 and leading to its subsequent proteasomal degradation. Ubiquitination is dependent on its phosphorylation at Ser-52, by PKC. Ubiquitination is stimulated by LPS. Post-translationally, phosphorylation at Ser-52 by PKC facilitates its ubiquitination and proteasomal degradation. As to expression, high expression in heart, placenta, lung, kidney and prostate. Predominantly expressed in pulmonary epithelia cells, specifically type II pneumocytes.

The protein resides in the cytoplasm. It functions in the pathway protein modification; protein ubiquitination. Its activity is regulated as follows. Substrate-binding is prevented by the covalent inhibitor MN551 that cross-links with Cys-111. Also inhibited by a MN551 derivative, MN714, which contains a pivaloyloxymethyl that allows cell permeability. Its function is as follows. Substrate-recognition component of a cullin-5-RING E3 ubiquitin-protein ligase complex (ECS complex, also named CRL5 complex), which mediates the ubiquitination and subsequent proteasomal degradation of target proteins, such as EPOR and GHR. Specifically recognizes and binds phosphorylated proteins via its SH2 domain, promoting their ubiquitination. The ECS(SOCS2) complex acts as a key regulator of growth hormone receptor (GHR) levels by mediating ubiquitination and degradation of GHR, following GHR phosphorylation by JAK2. The ECS(SOCS2) also catalyzes ubiquitination and degradation of JAK2-phosphorylated EPOR. This chain is Suppressor of cytokine signaling 2, found in Homo sapiens (Human).